The chain runs to 278 residues: Myb/SANT-like DNA-binding domain-containing protein 1 (278 aa).

One can recognise a Myb-like domain in the interval 44-131 (RNWTDAEMRG…WPYYLAIDRI (88 aa)). The disordered stretch occupies residues 139-167 (CEGKLPDGQQPGPSTSQTEASLSPSAKST). Positions 149-166 (PGPSTSQTEASLSPSAKS) are enriched in polar residues.

In Mus musculus (Mouse), this protein is Myb/SANT-like DNA-binding domain-containing protein 1 (Msantd1).